Here is a 689-residue protein sequence, read N- to C-terminus: Protein SDA1 homolog (689 aa).

The stretch at K254–D319 forms a coiled coil. Disordered stretches follow at residues E485 to W512 and K606 to K689. Residues S668–L681 are compositionally biased toward basic and acidic residues.

This sequence belongs to the SDA1 family.

The protein localises to the nucleus. The protein resides in the nucleolus. In terms of biological role, required for 60S pre-ribosomal subunits export to the cytoplasm. This chain is Protein SDA1 homolog (sdad1), found in Xenopus tropicalis (Western clawed frog).